The following is a 329-amino-acid chain: UPF0725 protein EMB2204 (329 aa).

The protein belongs to the UPF0725 (EMB2204) family.

In terms of biological role, may be involved in embryogenesis. The chain is UPF0725 protein EMB2204 (EMB2204) from Arabidopsis thaliana (Mouse-ear cress).